Here is a 251-residue protein sequence, read N- to C-terminus: Ubiquinone biosynthesis O-methyltransferase (251 aa).

Positions 36, 61, 82, and 124 each coordinate S-adenosyl-L-methionine.

This sequence belongs to the methyltransferase superfamily. UbiG/COQ3 family.

It catalyses the reaction a 3-demethylubiquinol + S-adenosyl-L-methionine = a ubiquinol + S-adenosyl-L-homocysteine + H(+). The enzyme catalyses a 3-(all-trans-polyprenyl)benzene-1,2-diol + S-adenosyl-L-methionine = a 2-methoxy-6-(all-trans-polyprenyl)phenol + S-adenosyl-L-homocysteine + H(+). Its pathway is cofactor biosynthesis; ubiquinone biosynthesis. Functionally, O-methyltransferase that catalyzes the 2 O-methylation steps in the ubiquinone biosynthetic pathway. The sequence is that of Ubiquinone biosynthesis O-methyltransferase from Rickettsia akari (strain Hartford).